Consider the following 223-residue polypeptide: Small ribosomal subunit protein uS5 (223 aa).

The tract at residues 1 to 48 is disordered; the sequence is MPGRQRRDGGSGPAGQNGPNSGDNSNARGDNRGGGRDRRDGGRGGNAA. Positions 29–42 are enriched in basic and acidic residues; sequence GDNRGGGRDRRDGG. The S5 DRBM domain occupies 53–116; sequence FIERVVTINR…EEARKSFFRV (64 aa).

It belongs to the universal ribosomal protein uS5 family. Part of the 30S ribosomal subunit. Contacts proteins S4 and S8.

In terms of biological role, with S4 and S12 plays an important role in translational accuracy. Located at the back of the 30S subunit body where it stabilizes the conformation of the head with respect to the body. This is Small ribosomal subunit protein uS5 from Rhodococcus erythropolis (strain PR4 / NBRC 100887).